The sequence spans 292 residues: Mitochondrial ornithine transporter 1 (292 aa).

3 Solcar repeats span residues 11 to 97 (EGAI…CSKF), 105 to 196 (SPLG…VKKS), and 211 to 292 (SKIW…LSAL). 6 helical membrane-spanning segments follow: residues 14–34 (ILDIINGSIAGACGKVIEFPF), 69–89 (FFQGIASPLVGACLENATLFV), 104–124 (VSPLGQILISGGVAGSCASLV), 171–187 (GQSGTFIRESFGGVAWF), 213–233 (IWELLISGGSAGLAFNASIFP), and 267–287 (GLGITLFRAVPANAAVFYIFE).

This sequence belongs to the mitochondrial carrier (TC 2.A.29) family.

It localises to the mitochondrion inner membrane. Required for arginine biosynthesis. Transports ornithine synthesized from glutamate in the mitochondrial matrix to the cytosol, where it is converted to arginine. The protein is Mitochondrial ornithine transporter 1 (ORT1) of Saccharomyces cerevisiae (strain ATCC 204508 / S288c) (Baker's yeast).